A 1026-amino-acid chain; its full sequence is MDWVALSKSCKTHLLDEGLDVSSIHCFDQYLIVGQCSGQVMVFDVSTDNHFTLIQTFIAHKHSVSSIVCLPFEADGIVDLSIITLDESGLLCQWLLKTCDRRATLQLCDGLCLKLFRLNNNFLAVTGTFLKIYLIRISNFQIVATWTGHEDWPILFPFKDEALLIPVAYSDGSVSLWSVDWSALTFKRNSVTKADVKPTFGKVIDVVPADCISSNYALYVYSDAVVLLESHEKFIASYSLAEITSVFVLADGTACIFTLSSSTLLKLHQSPEPHFELISKYSGDFPWKSCTILKSKPVSLCVYPEKITFNWLTEGTVDSCNLCKLSNTAAVSYAYTDSLNLFLGTTSGLVMFSLFDWYLHNDPAPLYSFTRVSGIVTYMKIFETEHSRSILVVATKTGKAYFYQQLQGERWRFLCERALQSSSITKIIHAKKSLSSGSSGLFIFMSLDGSLCALDESYNLLSYLPSDGAQVETLYSFPDLDQIYVAYDNFQLLNWDVVDQKCSEGNYSDIIDSSFISIGTFDKSNLPTLYHGSCALLTDNLVTVFLDAHDLVLNLNFSNENYIEKTYIDEFLDFIQPPFLNSDIEMEHQLLGTVFDQSSLHLGVGKPDGNAILRFDTEMKSIINTAPNCSALLLYLYFSLMVPLCKYDGLSDTKLTEGILLKLKDLKTVDYSISVLSYVWNNSGKVMQGIIKSMLSRTLELISPEELQRLIYYYFEFFTTTGGEYYLKKEVQHSLYILSLIVSLRPSAFDVSQLKFLSSYLLQKSESMDYDLTAIRLLSNGFSVFSKHIDPAKFIYNLVLSSLENTKDLDDKNSILYRSIVDVSVSNAVLLLTCLCDEVYEQMKSNLRSVILKVVSLAIENTQSEFSLFNQLITEKLLPILYSSRSVEEVHDVTNAIATQFPFACFDSKVEKYSYIDDGDLVVYEIAKRRKVVSKENAECDIQVLSASPSGDYFVGVSATQKECIIWKYSQDFVKFLNLSTPSLTIRKRILLQTNKTNEVEIPEVLWISQSSAEVHIGSTFAIIDL.

WD repeat units lie at residues L14 to L53, H62 to T104, G148 to K187, and N937 to L977.

The protein localises to the cytoplasm. It localises to the nucleus. This is an uncharacterized protein from Schizosaccharomyces pombe (strain 972 / ATCC 24843) (Fission yeast).